The following is a 373-amino-acid chain: D-alanine--D-alanine ligase (373 aa).

Residues 156–363 (KKLWSAAGLP…YPTLLATMVE (208 aa)) form the ATP-grasp domain. 184–239 (LQRLGLPAYVKPARGGSSIGVSRVSSFDELPAAIAAARRHDPKVIVEAAINGRELE) lines the ATP pocket. 3 residues coordinate Mg(2+): D318, E330, and N332.

Belongs to the D-alanine--D-alanine ligase family. The cofactor is Mg(2+). Mn(2+) is required as a cofactor.

Its subcellular location is the cytoplasm. The catalysed reaction is 2 D-alanine + ATP = D-alanyl-D-alanine + ADP + phosphate + H(+). It participates in cell wall biogenesis; peptidoglycan biosynthesis. Its function is as follows. Cell wall formation. This chain is D-alanine--D-alanine ligase, found in Mycobacterium ulcerans (strain Agy99).